Reading from the N-terminus, the 257-residue chain is TLC domain-containing protein 3A (257 aa).

7 helical membrane passes run 1-21, 42-62, 71-91, 114-134, 142-162, 181-201, and 220-240; these read MLLTLASGALFFPGLFALSIW, LVSSVQAVLATWAGLTVIISC, WLATEYVWFLIPYMIYDFYAM, LIENRLMVTHHTVILLFLVPI, LGDFFVGCIFTAELSTPFVSL, GILTVTTFLFCRILLFPFMYW, and LHCNMANAVLISPQLYWFSLL. In terms of domain architecture, TLC spans 33 to 249; it reads DDCLTVGTRL…LCKKAARLFD (217 aa).

In terms of assembly, interacts with GGT7 isoform 3 and SLC3A2.

The protein resides in the cell membrane. This Mus musculus (Mouse) protein is TLC domain-containing protein 3A (Tlcd3a).